We begin with the raw amino-acid sequence, 333 residues long: Probable endo-beta-1,4-glucanase B (333 aa).

An N-terminal signal peptide occupies residues 1-17 (MKFRNLFFAAVAGSAVA). Asn-37 and Asn-100 each carry an N-linked (GlcNAc...) asparagine glycan. Residue Glu-160 is the Proton donor of the active site. The active-site Nucleophile is Glu-267.

It belongs to the glycosyl hydrolase 5 (cellulase A) family.

The protein localises to the secreted. It catalyses the reaction Endohydrolysis of (1-&gt;4)-beta-D-glucosidic linkages in cellulose, lichenin and cereal beta-D-glucans.. Its function is as follows. Has endoglucanase activity on substrates containing beta-1,4 glycosidic bonds, like in carboxymethylcellulose (CMC), hydroxyethylcellulose (HEC) and beta-glucan. Involved in the degradation of complex natural cellulosic substrates. This Aspergillus oryzae (strain ATCC 42149 / RIB 40) (Yellow koji mold) protein is Probable endo-beta-1,4-glucanase B (eglB).